The primary structure comprises 620 residues: Protein translocase subunit SecD (620 aa).

The next 6 membrane-spanning stretches (helical) occupy residues 10-30 (YLLI…NLYP), 464-484 (LWGM…FGVI), 488-507 (ALAF…GATL), 511-533 (GIAG…FSRI), 555-575 (FTAI…LYAM), and 582-602 (GFAV…IMVT).

It belongs to the SecD/SecF family. SecD subfamily. As to quaternary structure, forms a complex with SecF. Part of the essential Sec protein translocation apparatus which comprises SecA, SecYEG and auxiliary proteins SecDF-YajC and YidC.

The protein resides in the cell inner membrane. Functionally, part of the Sec protein translocase complex. Interacts with the SecYEG preprotein conducting channel. SecDF uses the proton motive force (PMF) to complete protein translocation after the ATP-dependent function of SecA. This is Protein translocase subunit SecD from Pseudomonas aeruginosa (strain ATCC 15692 / DSM 22644 / CIP 104116 / JCM 14847 / LMG 12228 / 1C / PRS 101 / PAO1).